Reading from the N-terminus, the 438-residue chain is tRNA modification GTPase MnmE (438 aa).

(6S)-5-formyl-5,6,7,8-tetrahydrofolate contacts are provided by Arg20, Glu78, and Lys117. Residues 214 to 359 (GIRVLIIGKP…LIDEIKKLFY (146 aa)) form the TrmE-type G domain. Asn224 contacts K(+). GTP-binding positions include 224–229 (NVGKST), 243–249 (TDIPGTT), and 268–271 (DTAG). Ser228 contacts Mg(2+). Residues Thr243, Ile245, and Thr248 each contribute to the K(+) site. Thr249 contacts Mg(2+). A (6S)-5-formyl-5,6,7,8-tetrahydrofolate-binding site is contributed by Lys438.

This sequence belongs to the TRAFAC class TrmE-Era-EngA-EngB-Septin-like GTPase superfamily. TrmE GTPase family. In terms of assembly, homodimer. Heterotetramer of two MnmE and two MnmG subunits. K(+) is required as a cofactor.

It localises to the cytoplasm. In terms of biological role, exhibits a very high intrinsic GTPase hydrolysis rate. Involved in the addition of a carboxymethylaminomethyl (cmnm) group at the wobble position (U34) of certain tRNAs, forming tRNA-cmnm(5)s(2)U34. In Ureaplasma parvum serovar 3 (strain ATCC 27815 / 27 / NCTC 11736), this protein is tRNA modification GTPase MnmE.